The primary structure comprises 115 residues: Large ribosomal subunit protein bL19 (115 aa).

Belongs to the bacterial ribosomal protein bL19 family.

Its function is as follows. This protein is located at the 30S-50S ribosomal subunit interface and may play a role in the structure and function of the aminoacyl-tRNA binding site. The chain is Large ribosomal subunit protein bL19 from Streptococcus pyogenes serotype M49 (strain NZ131).